The sequence spans 120 residues: Ribonuclease P protein component (120 aa).

The protein belongs to the RnpA family. In terms of assembly, consists of a catalytic RNA component (M1 or rnpB) and a protein subunit.

The enzyme catalyses Endonucleolytic cleavage of RNA, removing 5'-extranucleotides from tRNA precursor.. RNaseP catalyzes the removal of the 5'-leader sequence from pre-tRNA to produce the mature 5'-terminus. It can also cleave other RNA substrates such as 4.5S RNA. The protein component plays an auxiliary but essential role in vivo by binding to the 5'-leader sequence and broadening the substrate specificity of the ribozyme. The protein is Ribonuclease P protein component of Dehalococcoides mccartyi (strain ATCC BAA-2266 / KCTC 15142 / 195) (Dehalococcoides ethenogenes (strain 195)).